We begin with the raw amino-acid sequence, 348 residues long: Nuclear receptor subfamily 1 group I member 3 (348 aa).

The segment at residues P8–S83 is a DNA-binding region (nuclear receptor). An NR C4-type zinc finger spans residues C11–C31. Position 38 is a phosphothreonine; by PKC (T38). The NR C4-type zinc-finger motif lies at C47–C71. An NR LBD domain is found at G109 to S348.

It belongs to the nuclear hormone receptor family. NR1 subfamily. Heterodimer of NR1I3 and RXR. Interacts with PSMC4. Interacts with ECT2. Directly interacts with DNAJC7; this complex may also include HSP90. Interacts with CRY1. Interacts with CRY2 in a ligand-dependent manner. Phosphorylated at Thr-38 by PKC, dephosphorylation of Thr-38 is required for nuclear translocation and activation.

It localises to the nucleus. Its subcellular location is the cytoplasm. The protein resides in the cytoskeleton. In terms of biological role, binds and transactivates the retinoic acid response elements that control expression of the retinoic acid receptor beta 2 and alcohol dehydrogenase 3 genes. Transactivates both the phenobarbital responsive element module of the human CYP2B6 gene and the CYP3A4 xenobiotic response element. The chain is Nuclear receptor subfamily 1 group I member 3 (NR1I3) from Callorhinus ursinus (Northern fur seal).